The sequence spans 581 residues: Mitosis inhibitor protein kinase mik1 (581 aa).

Disordered stretches follow at residues 43–71 and 148–178; these read GHEENQSHKSSKLTFFKPSNTKRSPHTPM and NLTNPRSEQPHTPCKKGTKIKLKPPQSPLSP. Positions 59–71 are enriched in polar residues; that stretch reads KPSNTKRSPHTPM. The span at 160–169 shows a compositional bias: basic residues; that stretch reads PCKKGTKIKL. A Protein kinase domain is found at 289–561; the sequence is FQQVKPIHES…LLAMPEMIFI (273 aa). ATP contacts are provided by residues 295–303 and K320; that span reads IHESDFSFV. The Proton acceptor role is filled by D417. Mg(2+) contacts are provided by N422 and D435.

The protein belongs to the protein kinase superfamily. Ser/Thr protein kinase family. WEE1 subfamily.

The catalysed reaction is L-seryl-[protein] + ATP = O-phospho-L-seryl-[protein] + ADP + H(+). The enzyme catalyses L-threonyl-[protein] + ATP = O-phospho-L-threonyl-[protein] + ADP + H(+). Protein kinase that acts both on serines and on tyrosines. It acts as a negative regulator of entry into mitosis (G2 to M transition). Phosphorylates and inhibits cdc2. The polypeptide is Mitosis inhibitor protein kinase mik1 (mik1) (Schizosaccharomyces pombe (strain 972 / ATCC 24843) (Fission yeast)).